A 374-amino-acid chain; its full sequence is Chaperone protein DnaJ (374 aa).

The region spanning 6 to 71 is the J domain; it reads DYYAVLEVTR…QKRAAYDRFG (66 aa). The CR-type zinc finger occupies 130-209; the sequence is GVKKPITVPT…CHGAGTVERE (80 aa). Zn(2+) is bound by residues Cys-143, Cys-146, Cys-161, Cys-164, Cys-183, Cys-186, Cys-197, and Cys-200. CXXCXGXG motif repeat units follow at residues 143-150, 161-168, 183-190, and 197-204; these read CESCEGTG, CPTCHGAG, and CAACHGAG.

The protein belongs to the DnaJ family. As to quaternary structure, homodimer. Requires Zn(2+) as cofactor.

Its subcellular location is the cytoplasm. Its function is as follows. Participates actively in the response to hyperosmotic and heat shock by preventing the aggregation of stress-denatured proteins and by disaggregating proteins, also in an autonomous, DnaK-independent fashion. Unfolded proteins bind initially to DnaJ; upon interaction with the DnaJ-bound protein, DnaK hydrolyzes its bound ATP, resulting in the formation of a stable complex. GrpE releases ADP from DnaK; ATP binding to DnaK triggers the release of the substrate protein, thus completing the reaction cycle. Several rounds of ATP-dependent interactions between DnaJ, DnaK and GrpE are required for fully efficient folding. Also involved, together with DnaK and GrpE, in the DNA replication of plasmids through activation of initiation proteins. This is Chaperone protein DnaJ from Gluconacetobacter diazotrophicus (strain ATCC 49037 / DSM 5601 / CCUG 37298 / CIP 103539 / LMG 7603 / PAl5).